A 103-amino-acid polypeptide reads, in one-letter code: Large ribosomal subunit protein bL21 (103 aa).

This sequence belongs to the bacterial ribosomal protein bL21 family. Part of the 50S ribosomal subunit. Contacts protein L20.

This protein binds to 23S rRNA in the presence of protein L20. This is Large ribosomal subunit protein bL21 from Azotobacter vinelandii (strain DJ / ATCC BAA-1303).